The sequence spans 236 residues: Purine nucleoside phosphorylase DeoD-type (236 aa).

Residue His-4 participates in a purine D-ribonucleoside binding. Phosphate contacts are provided by residues Gly-20, Arg-24, Arg-43, and 87-90; that span reads RVGT. A purine D-ribonucleoside contacts are provided by residues 178–180 and 202–203; these read EME and SD. Asp-203 (proton donor) is an active-site residue.

The protein belongs to the PNP/UDP phosphorylase family. Homohexamer; trimer of homodimers.

It catalyses the reaction a purine D-ribonucleoside + phosphate = a purine nucleobase + alpha-D-ribose 1-phosphate. The catalysed reaction is a purine 2'-deoxy-D-ribonucleoside + phosphate = a purine nucleobase + 2-deoxy-alpha-D-ribose 1-phosphate. In terms of biological role, catalyzes the reversible phosphorolytic breakdown of the N-glycosidic bond in the beta-(deoxy)ribonucleoside molecules, with the formation of the corresponding free purine bases and pentose-1-phosphate. In Geobacillus kaustophilus (strain HTA426), this protein is Purine nucleoside phosphorylase DeoD-type.